The sequence spans 391 residues: Terminal nucleotidyltransferase 5C (391 aa).

This sequence belongs to the TENT family. Interacts with BCCIP and PABPC1; the interaction has no effect on TENT5C poly(A) polymerase function. Interacts with PLK4; this interaction leads to the TENT5C recruitment into the centrosome. Expressed by splenocytes, expression is increased in activated splenocytes.

It localises to the nucleus. It is found in the cytoplasm. The protein resides in the cytoskeleton. The protein localises to the microtubule organizing center. Its subcellular location is the centrosome. It carries out the reaction RNA(n) + ATP = RNA(n)-3'-adenine ribonucleotide + diphosphate. In terms of biological role, catalyzes the transfer of one adenosine molecule from an ATP to an mRNA poly(A) tail bearing a 3'-OH terminal group and enhances mRNA stability and gene expression. Can also elongate RNA oligos ending with uridine molecule, provided that the sequence is adenosine-rich. Mainly targets mRNAs encoding endoplasmic reticulum-targeted protein. The sequence is that of Terminal nucleotidyltransferase 5C from Mus musculus (Mouse).